Here is a 304-residue protein sequence, read N- to C-terminus: Small ribosomal subunit biogenesis GTPase RsgA (304 aa).

A CP-type G domain is found at 78–237 (VSFLTRPPVA…VADTPGFNRP (160 aa)). Residues 127–130 (TKTD) and 179–187 (GPSGVGKSS) each bind GTP. 4 residues coordinate Zn(2+): C262, C267, H269, and C275.

The protein belongs to the TRAFAC class YlqF/YawG GTPase family. RsgA subfamily. Monomer. Associates with 30S ribosomal subunit, binds 16S rRNA. Zn(2+) serves as cofactor.

Its subcellular location is the cytoplasm. In terms of biological role, one of several proteins that assist in the late maturation steps of the functional core of the 30S ribosomal subunit. Helps release RbfA from mature subunits. May play a role in the assembly of ribosomal proteins into the subunit. Circularly permuted GTPase that catalyzes slow GTP hydrolysis, GTPase activity is stimulated by the 30S ribosomal subunit. This Synechococcus sp. (strain CC9311) protein is Small ribosomal subunit biogenesis GTPase RsgA.